A 260-amino-acid polypeptide reads, in one-letter code: Adenosine 5'-phosphosulfate reductase (260 aa).

[4Fe-4S] cluster contacts are provided by C130, C131, C213, and C216. C241 (nucleophile; cysteine thiosulfonate intermediate) is an active-site residue.

This sequence belongs to the PAPS reductase family. CysH subfamily. [4Fe-4S] cluster is required as a cofactor.

It localises to the cytoplasm. It catalyses the reaction [thioredoxin]-disulfide + sulfite + AMP + 2 H(+) = adenosine 5'-phosphosulfate + [thioredoxin]-dithiol. Its pathway is sulfur metabolism; hydrogen sulfide biosynthesis; sulfite from sulfate. Functionally, catalyzes the formation of sulfite from adenosine 5'-phosphosulfate (APS) using thioredoxin as an electron donor. In Agrobacterium fabrum (strain C58 / ATCC 33970) (Agrobacterium tumefaciens (strain C58)), this protein is Adenosine 5'-phosphosulfate reductase.